Reading from the N-terminus, the 261-residue chain is Hydrolase in agr operon (261 aa).

The CN hydrolase domain maps to 1 to 239 (MKVQIYQLPI…ADILTVDLNL (239 aa)). Glu-41 functions as the Proton acceptor in the catalytic mechanism. Lys-110 acts as the Proton donor in catalysis. The active-site Nucleophile is Cys-146.

The protein belongs to the carbon-nitrogen hydrolase superfamily. NIT1/NIT2 family.

In Staphylococcus aureus, this protein is Hydrolase in agr operon.